Reading from the N-terminus, the 866-residue chain is Oxidation resistance protein 1 (866 aa).

A disordered region spans residues 1–92 (MSVSNLSWLK…KKDGRRMSFQ (92 aa)). Residues 63 to 88 (RKSELKRFYTIDTGQKKTLDKKDGRR) show a composition bias toward basic and acidic residues. Ser-90 bears the Phosphoserine mark. The LysM domain occupies 98-141 (IEYTVESRDSLNSIALKFDTTPNELVQLNKLFSRAVVTGQVLYV). Thr-118 is modified (phosphothreonine). Residues 150-168 (VESSPSLSPVSPLSPTSSE) show a composition bias toward low complexity. The disordered stretch occupies residues 150 to 202 (VESSPSLSPVSPLSPTSSEAEFDKTTTPDVAHPKEAPPASTVSGIRPARVVSS). Over residues 170–184 (EFDKTTTPDVAHPKE) the composition is skewed to basic and acidic residues. A phosphoserine mark is found at Ser-201, Ser-202, and Ser-204. In terms of domain architecture, GRAM spans 213–268 (KFLKINCKYITIGKGTVSGVLLVTPNNIMFDPHKTDPLVQENGCEEYGIMCPMEEV). The tract at residues 293–540 (LSGRGSCHSK…AHGEGSSLLK (248 aa)) is disordered. 3 positions are modified to phosphoserine: Ser-294, Ser-334, and Ser-336. The residue at position 341 (Thr-341) is a Phosphothreonine. Ser-346 carries the phosphoserine modification. Residues 347-363 (PIREELLSSEPRQEKSS) are compositionally biased toward basic and acidic residues. Polar residues predominate over residues 364 to 399 (DASSESVQTVSQMEVQSLTATSEAANVPDRTSSNPG). The segment covering 433–447 (QSTEVKGQDNQDSSH) has biased composition (basic and acidic residues). Over residues 448 to 465 (QESSLQQEAGEDSVSSGE) the composition is skewed to polar residues. A compositionally biased stretch (basic and acidic residues) spans 483–497 (ELKRDSETEVEELRK). A Phosphoserine modification is found at Ser-488. Positions 502–519 (HSMQQAKQQRDTIQQVSQ) are enriched in polar residues. A mediates oxidative antimutator activity region spans residues 543 to 570 (RRHRLHKFLCLRVGKPMRKTFVSQASAT). The disordered stretch occupies residues 682-703 (KQVAPAKADLEPESFRPNLSDP). The 162-residue stretch at 705–866 (ELLLPDQIEK…IQDIEIWAFE (162 aa)) folds into the TLDc domain.

The protein belongs to the OXR1 family. In terms of tissue distribution, highly expressed in brain and testis.

The protein localises to the mitochondrion. It localises to the nucleus. It is found in the nucleolus. May be involved in protection from oxidative damage. In Mus musculus (Mouse), this protein is Oxidation resistance protein 1 (Oxr1).